A 44-amino-acid chain; its full sequence is Photosystem I reaction center subunit IX (44 aa).

Residues 7–27 (YLSVAPVLTTLWFGSLAGLLI) traverse the membrane as a helical segment.

This sequence belongs to the PsaJ family.

It localises to the plastid. It is found in the chloroplast thylakoid membrane. May help in the organization of the PsaE and PsaF subunits. This chain is Photosystem I reaction center subunit IX, found in Nymphaea alba (White water-lily).